Consider the following 421-residue polypeptide: UPF0415 protein C7orf25 homolog (421 aa).

Belongs to the UPF0415 family.

The chain is UPF0415 protein C7orf25 homolog from Bos taurus (Bovine).